Here is a 101-residue protein sequence, read N- to C-terminus: Small ribosomal subunit protein uS14 (101 aa).

Belongs to the universal ribosomal protein uS14 family. As to quaternary structure, part of the 30S ribosomal subunit. Contacts proteins S3 and S10.

Binds 16S rRNA, required for the assembly of 30S particles and may also be responsible for determining the conformation of the 16S rRNA at the A site. In Neisseria gonorrhoeae (strain ATCC 700825 / FA 1090), this protein is Small ribosomal subunit protein uS14.